Reading from the N-terminus, the 246-residue chain is Probable transcriptional regulatory protein Pden_1905 (246 aa).

The interval 1–21 is disordered; that stretch reads MAGHSKWANIQHRKGKQDKLR.

This sequence belongs to the TACO1 family.

Its subcellular location is the cytoplasm. The chain is Probable transcriptional regulatory protein Pden_1905 from Paracoccus denitrificans (strain Pd 1222).